Consider the following 353-residue polypeptide: UPF0283 membrane protein YcjF (353 aa).

The span at 1-19 (MSEPLKPRIDFAEPLKEEP) shows a compositional bias: basic and acidic residues. The segment at 1-35 (MSEPLKPRIDFAEPLKEEPTSAFKAQQTFSEAESR) is disordered. 3 helical membrane-spanning segments follow: residues 70–90 (MVMGGLALFGASVVGQGVQWT), 100–120 (VALGGCAAGALIIGAGVGSVV), and 213–233 (ESTLMIVVSPLALVDMAFIAW).

It belongs to the UPF0283 family.

It is found in the cell inner membrane. This is UPF0283 membrane protein YcjF from Salmonella newport (strain SL254).